The primary structure comprises 438 residues: Protein pop-1 (438 aa).

Positions 1–39 (MMADEELGDEVKVFRRDEDADDDPMISGETSEQQLADDK) are disordered. The tract at residues 1–45 (MMADEELGDEVKVFRRDEDADDDPMISGETSEQQLADDKKEAVME) is sufficient for interaction with beta-catenin/sys-1. Residues 9 to 18 (DEVKVFRRDE) are compositionally biased toward basic and acidic residues. Positions 88–130 (AALPMFMPLFMNPYAAALRSPSLMFPMGAMSPTFPMFPPSPVY) are involved in nuclear asymmetry. Residues Ser118 and Ser127 each carry the phosphoserine; by LIT1 modification. Residues 192-262 (VKKPLNAFMW…THKERYPEWS (71 aa)) constitute a DNA-binding region (HMG box). Positions 250–263 (DKETHKERYPEWSA) are enriched in basic and acidic residues. 3 disordered regions span residues 250–288 (DKET…ENND), 318–351 (TDRS…PKAN), and 378–438 (TTGA…MCTI). Basic residues predominate over residues 270–279 (NKKKTKKRRD). 2 stretches are compositionally biased toward polar residues: residues 324–339 (SDIT…SGAY) and 378–395 (TTGA…SSAG). The span at 406-418 (SESDVEEEEDEQI) shows a compositional bias: acidic residues.

Belongs to the TCF/LEF family. As to quaternary structure, interacts (via N-terminal region) with beta-catenin homolog sys-1. Interacts with hda-1. Interacts with bar-1. Interacts with par-5; the interaction is direct and is enhanced by lit-1-mediated pop-1 phosphorylation. The interaction also leads to the subsequent nuclear export of pop-1. Interacts (when phosphorylated on Ser-118 and Ser-127) with lit-1; the interaction is dependent on the beta-catenin-lit-1 complex. Interacts with wrm-1. Interacts with homeobox protein egl-5. Interacts with zinc finger transcription factor ref-2; the interaction is direct and facilitates transcriptional activation; transcription may be repressed by beta-catenin/sys-1. In terms of processing, phosphorylated on Ser-118 and Ser-127 by lit-1 in the beta-catenin-lit-1 complex. Phosphorylation promotes the interaction of pop-1 and par-5 and the subsequent translocation of pop-1 from the nucleus to the cytoplasm.

It localises to the nucleus. Its subcellular location is the cytoplasm. Its function is as follows. Transcription factor. Part of the Wnt signaling asymmetry pathway. Binds to the consensus sequence, 5'-(C/T)TTTG(A/T)(A/T)(G/C)-3'. Activates or represses target gene expression, depending on upstream Wnt signals and interactions with transcription co-regulators, such as beta-catenin/sys-1 or zinc finger transcription factor ref-2. Essential for the specification of the mesodermal and endodermal cell fates in early embryos. Required in many asymmetrical cell divisions in the early embryo and during larval development. Reciprocal distribution patterns of sys-1 and pop-1 in the daughters of anterior-posterior cell divisions functions in specifying cell fate; a higher sys-1 to pop-1 ratio promotes the posterior cell fate, whereas a low sys-1 to pop-1 ratio promotes the anterior fate. Involved in modulating nuclear localization or nuclear retention of sys-1. Involved in the terminal asymmetrical division of many embryonic neuroblasts; for example in the SMDD/AIY neuron lineage. In complex with ref-2, positively modulates expression of LIM/homeobox protein ttx-3 in anterior daughter cells of the SMDD/AIY lineage. Required for asymmetrical division of somatic gonadal precursor descendants which initiate axis formation required to control organ shape. Similarly, involved in asymmetrical division of seam cells, a stem cell-like lineage. Represses expression of target genes via its interaction with hda-1 histone deacetylase. Required for specification of the M lineage-derived coelomocyte and sex myoblast fate. Regulates coelomocyte fate by positively regulating proliferation and ceh-34 and possibly eya-1 expression in M.dlpa and M.drpa precursors. The polypeptide is Protein pop-1 (Caenorhabditis elegans).